The primary structure comprises 365 residues: Pyruvate dehydrogenase E1 component subunit beta, mitochondrial (365 aa).

The N-terminal 24 residues, 1–24, are a transit peptide targeting the mitochondrion; the sequence is MLRTRLIQAASSAQRAFSTSQKAL. Glutamate 85 serves as a coordination point for thiamine diphosphate. K(+) is bound by residues isoleucine 138, alanine 186, isoleucine 187, and aspartate 189.

It depends on thiamine diphosphate as a cofactor. Expressed in salivary glands (at protein level).

The protein resides in the mitochondrion matrix. The enzyme catalyses N(6)-[(R)-lipoyl]-L-lysyl-[protein] + pyruvate + H(+) = N(6)-[(R)-S(8)-acetyldihydrolipoyl]-L-lysyl-[protein] + CO2. In terms of biological role, the pyruvate dehydrogenase complex catalyzes the overall conversion of pyruvate to acetyl-CoA and CO(2). Might play a role in regulating synapse structure formation at neuromuscular junctions. Might play a role in maintenance of mitochondrial morphology. The sequence is that of Pyruvate dehydrogenase E1 component subunit beta, mitochondrial from Drosophila melanogaster (Fruit fly).